Here is a 257-residue protein sequence, read N- to C-terminus: Transmembrane protein 101 (257 aa).

8 helical membrane-spanning segments follow: residues 24 to 40 (TRCPFWGCFSQLMLYAE), 52 to 72 (VPYLYFDMGAAVLCASFMSFG), 77 to 97 (WFALGAALQLAISTYTAYIGG), 110 to 130 (YSRTVAIIGGFLVLASGAGEL), 139 to 159 (SLQSTGQVFLGIYLICVAYSL), 182 to 202 (LFFVLYGVLALAFLSGYYVTL), 206 to 226 (ILAVLLPPVMLLIDGNVSYWH), and 233 to 253 (FWNQMKLLGESVGIFGAAVIL).

The protein localises to the membrane. In terms of biological role, may activate NF-kappa-B signaling pathways. This is Transmembrane protein 101 (Tmem101) from Mus musculus (Mouse).